Reading from the N-terminus, the 570-residue chain is Coiled-coil domain-containing protein 22 homolog (570 aa).

2 disordered regions span residues 110 to 129 (RQSE…REQL) and 234 to 280 (LTST…PLEL). Polar residues predominate over residues 248 to 257 (TSPTQTSTTA). Residues 265–276 (SSEATATSTTTT) are compositionally biased toward low complexity. Coiled coils occupy residues 308 to 471 (ELKI…LQRQ) and 529 to 570 (GEKL…ITVG).

This sequence belongs to the CCDC22 family.

The sequence is that of Coiled-coil domain-containing protein 22 homolog from Drosophila willistoni (Fruit fly).